A 160-amino-acid polypeptide reads, in one-letter code: Nucleotide-binding protein CPS_1098 (160 aa).

Belongs to the YajQ family.

In terms of biological role, nucleotide-binding protein. In Colwellia psychrerythraea (strain 34H / ATCC BAA-681) (Vibrio psychroerythus), this protein is Nucleotide-binding protein CPS_1098.